Reading from the N-terminus, the 388-residue chain is Ribosomal RNA large subunit methyltransferase F (388 aa).

Residues 1–22 (MKTNNHNAKQAQTKTAKSNPSK) show a composition bias toward polar residues. Residues 1 to 51 (MKTNNHNAKQAQTKTAKSNPSKEVTKIKPKRVKNKPTAKAAKSTGLKTNAA) form a disordered region. Over residues 27–36 (IKPKRVKNKP) the composition is skewed to basic residues.

This sequence belongs to the methyltransferase superfamily. METTL16/RlmF family.

The protein resides in the cytoplasm. It catalyses the reaction adenosine(1618) in 23S rRNA + S-adenosyl-L-methionine = N(6)-methyladenosine(1618) in 23S rRNA + S-adenosyl-L-homocysteine + H(+). Functionally, specifically methylates the adenine in position 1618 of 23S rRNA. This is Ribosomal RNA large subunit methyltransferase F from Vibrio campbellii (strain ATCC BAA-1116).